The primary structure comprises 213 residues: Large ribosomal subunit protein uL1 (213 aa).

This sequence belongs to the universal ribosomal protein uL1 family.

The sequence is that of Large ribosomal subunit protein uL1 (RPL10A) from Chlamydomonas reinhardtii (Chlamydomonas smithii).